A 141-amino-acid polypeptide reads, in one-letter code: Small ribosomal subunit protein bS6 (141 aa).

The tract at residues 96–141 is disordered; the sequence is VTGPSAMMKTVEREEFRKASQAGNQTTAPAASPADHAAAPASADRS. The span at 123 to 141 shows a compositional bias: low complexity; sequence APAASPADHAAAPASADRS.

This sequence belongs to the bacterial ribosomal protein bS6 family.

Binds together with bS18 to 16S ribosomal RNA. This is Small ribosomal subunit protein bS6 from Verminephrobacter eiseniae (strain EF01-2).